We begin with the raw amino-acid sequence, 276 residues long: Methylesterase 17 (276 aa).

Positions 19-138 (PHFVLIHGMS…TDEDMKDGVP (120 aa)) constitute an AB hydrolase-1 domain. Catalysis depends on Ser95, which acts as the Acyl-ester intermediate. Residues Asp225 and His252 each act as charge relay system in the active site.

Belongs to the AB hydrolase superfamily. Methylesterase family. As to expression, expressed in several tissues of seedlings and adult plants, with a higher relative level of expression in the seedling shoot apex and the adult stem.

It carries out the reaction methyl (indol-3-yl)acetate + H2O = (indol-3-yl)acetate + methanol + H(+). It functions in the pathway plant hormone biosynthesis. Methylesterase that efficiently and specifically hydrolyzes methyl indole-3-acetic acid (MeIAA) to IAA (auxin). MeIAA is believed to be an inactive form of auxin that needs to be demethylated to exert a biological effect. In Arabidopsis thaliana (Mouse-ear cress), this protein is Methylesterase 17.